The following is a 44-amino-acid chain: Tachystatin-A1 (44 aa).

3 disulfides stabilise this stretch: C4–C24, C11–C29, and C23–C41.

In terms of tissue distribution, granular hemocytes, small secretory granules.

The protein localises to the secreted. Its function is as follows. Exhibits stronger antimicrobial activity against the Gram-positive bacteria (S.aureus (IC(50) is 4.2 ug/ml)) and fungi (C.albicans (IC(50) is 3.0 ug/ml) and P.pastoris (IC(50) is 0.5 ug/ml)) than Gram-negative bacteria (E.coli (IC(50) is 25 ug/ml)). Binds to chitin (8.4 uM are required to obtain 50% of binding). Does not cause hemolysis on sheep erythrocytes. Has no blocking activity on the P-type calcium channel. This is Tachystatin-A1 from Tachypleus tridentatus (Japanese horseshoe crab).